We begin with the raw amino-acid sequence, 151 residues long: Small ribosomal subunit protein uS19 (151 aa).

Belongs to the universal ribosomal protein uS19 family.

The chain is Small ribosomal subunit protein uS19 (RPS15) from Picea mariana (Black spruce).